Reading from the N-terminus, the 123-residue chain is uncharacterized protein (123 aa).

The interval 34-123 is disordered; that stretch reads PEKISQTVKK…MNRDGGVKKE (90 aa). Composition is skewed to basic and acidic residues over residues 50-60, 74-100, and 107-123; these read KKIDENKDKSP, TAKD…EFSQ, and EETR…VKKE.

It localises to the mitochondrion. This is an uncharacterized protein from Schizosaccharomyces pombe (strain 972 / ATCC 24843) (Fission yeast).